The chain runs to 1575 residues: Ovochymase (1575 aa).

An N-terminal signal peptide occupies residues 1 to 19 (MIVTFVALALSCCTPQVTA). The 245-residue stretch at 36 to 280 (IVGGEMAKLG…YSSWIANYTQ (245 aa)) folds into the Peptidase S1 1 domain. A disulfide bridge connects residues C61 and C77. Residues H76 and D132 each act as charge relay system in the active site. 3 disulfide bridges follow: C166–C233, C199–C212, and C223–C256. S227 functions as the Charge relay system in the catalytic mechanism. N277 and N303 each carry an N-linked (GlcNAc...) asparagine glycan. Cystine bridges form between C300–C330, C358–C386, C432–C460, and C486–C507. 2 consecutive CUB domains span residues 300 to 423 (CSSN…FHAV) and 432 to 545 (CGGI…YYFS). N-linked (GlcNAc...) asparagine glycosylation is found at N497, N513, and N549. Positions 575–810 (IVNGDIAIAG…YIDWIIATAN (236 aa)) constitute a Peptidase S1 2 domain. C602 and C618 are oxidised to a cystine. Catalysis depends on charge relay system residues H617 and D665. 3 disulfides stabilise this stretch: C700–C766, C730–C745, and C756–C786. N748 carries an N-linked (GlcNAc...) asparagine glycan. The active-site Charge relay system is the S760. N810 carries N-linked (GlcNAc...) asparagine glycosylation. 7 disulfide bridges follow: C830-C859, C889-C913, C956-C984, C1012-C1034, C1080-C1108, C1135-C1158, and C1221-C1246. CUB domains are found at residues 830–949 (CIQL…YRLE), 956–1070 (CGQL…FVEL), 1080–1197 (CGGV…YTAV), and 1221–1341 (CQDS…YKLM). Residues N968, N1027, N1087, and N1090 are each glycosylated (N-linked (GlcNAc...) asparagine). The N-linked (GlcNAc...) asparagine glycan is linked to N1273. One can recognise a Peptidase S1 3 domain in the interval 1314 to 1575 (YNGGEISMLF…FLKWITKIIQ (262 aa)). Intrachain disulfides connect C1376-C1392 and C1493-C1507. An N-linked (GlcNAc...) asparagine glycan is attached at N1511.

Belongs to the peptidase S1 family. In terms of tissue distribution, expressed in the testis and ovary. Expressed in the gonads and gametes. Expressed in the follicle cells covering the vitelline coat of ovarian egg.

It is found in the secreted. May be responsible for elevation of the vitelline coat at the late developmental stage of oogenesis and during fertilization in ovarian eggs. This Halocynthia roretzi (Sea squirt) protein is Ovochymase.